We begin with the raw amino-acid sequence, 500 residues long: FAD-linked oxidoreductase easE (500 aa).

The FAD-binding PCMH-type domain maps to 37–220 (QGRIPLFTVG…TRATMRVFPD (184 aa)).

The protein belongs to the oxygen-dependent FAD-linked oxidoreductase family. It depends on FAD as a cofactor.

The protein operates within alkaloid biosynthesis; ergot alkaloid biosynthesis. FAD-linked oxidoreductase; part of the gene cluster that mediates the biosynthesis of fungal ergot alkaloid. DmaW catalyzes the first step of ergot alkaloid biosynthesis by condensing dimethylallyl diphosphate (DMAP) and tryptophan to form 4-dimethylallyl-L-tryptophan. The second step is catalyzed by the methyltransferase easF that methylates 4-dimethylallyl-L-tryptophan in the presence of S-adenosyl-L-methionine, resulting in the formation of 4-dimethylallyl-L-abrine. The catalase easC and the FAD-dependent oxidoreductase easE then transform 4-dimethylallyl-L-abrine to chanoclavine-I which is further oxidized by easD in the presence of NAD(+), resulting in the formation of chanoclavine-I aldehyde. Chanoclavine-I aldehyde is the precursor of ergoamides and ergopeptines in Clavicipitaceae, and clavine-type alcaloids such as fumiclavine in Trichocomaceae. However, the metabolites downstream of chanoclavine-I aldehyde in Arthrodermataceae have not been identified yet. The sequence is that of FAD-linked oxidoreductase easE from Arthroderma benhamiae (strain ATCC MYA-4681 / CBS 112371) (Trichophyton mentagrophytes).